The primary structure comprises 452 residues: Growth/differentiation factor 6 (452 aa).

Positions Met-1–Gly-22 are cleaved as a signal peptide. Positions Phe-23 to Arg-332 are excised as a propeptide. Residues Ser-29 to Val-93 form a disordered region. Composition is skewed to basic and acidic residues over residues Asp-37–Lys-46 and Ala-58–Arg-75. N-linked (GlcNAc...) asparagine glycosylation is present at Asn-115. 2 disordered regions span residues Arg-244–Gly-267 and Ala-301–Arg-348. A compositionally biased stretch (low complexity) spans Ala-301 to Pro-317. Positions Gly-327–Arg-348 are enriched in basic residues. 3 disulfides stabilise this stretch: Cys-351-Cys-417, Cys-380-Cys-449, and Cys-384-Cys-451.

This sequence belongs to the TGF-beta family. As to quaternary structure, homodimer; disulfide-linked.

Its subcellular location is the secreted. Its function is as follows. Growth factor that controls proliferation and cellular differentiation in the retina and bone formation. Plays a key role in regulating apoptosis during retinal development. Establishes dorsal-ventral positional information in the retina and controls the formation of the retinotectal map. Required for normal formation of bones and joints in the limbs, skull, digits and axial skeleton. Plays a key role in establishing boundaries between skeletal elements during development. Regulation of GDF6 expression seems to be a mechanism for evolving species-specific changes in skeletal structures. Seems to positively regulate differentiation of chondrogenic tissue through the growth factor receptors subunits BMPR1A, BMPR1B, BMPR2 and ACVR2A, leading to the activation of SMAD1-SMAD5-SMAD8 complex. The regulation of chondrogenic differentiation is inhibited by NOG. Also involved in the induction of adipogenesis from mesenchymal stem cells. This mechanism acts through the growth factor receptors subunits BMPR1A, BMPR2 and ACVR2A and the activation of SMAD1-SMAD5-SMAD8 complex and MAPK14/p38. In Rattus norvegicus (Rat), this protein is Growth/differentiation factor 6 (Gdf6).